A 97-amino-acid polypeptide reads, in one-letter code: uncharacterized protein (97 aa).

Residues 1–24 show a composition bias toward basic and acidic residues; it reads MTQKNGADRPDDYKRFSSLDKEYD. The interval 1-97 is disordered; the sequence is MTQKNGADRP…FEGTIDQNLD (97 aa). Residues 31 to 43 show a composition bias toward low complexity; it reads SNTETESVNTETQ. A compositionally biased stretch (basic and acidic residues) spans 44–53; that stretch reads THNKENKNDT.

This is an uncharacterized protein from Bacillus subtilis (strain 168).